A 351-amino-acid chain; its full sequence is Putative glycosyltransferase 45 (351 aa).

Belongs to the glycosyltransferase group 1 family.

The polypeptide is Putative glycosyltransferase 45 (SIFV0045) (Sulfolobus islandicus filamentous virus (isolate Iceland/Hveragerdi) (SIFV)).